The primary structure comprises 270 residues: Glutamate racemase (270 aa).

Residues Asp-7–Ser-8 and Tyr-39–Gly-40 each bind substrate. Cys-70 acts as the Proton donor/acceptor in catalysis. Asn-71–Thr-72 contacts substrate. Catalysis depends on Cys-194, which acts as the Proton donor/acceptor. Thr-195–His-196 lines the substrate pocket.

This sequence belongs to the aspartate/glutamate racemases family.

It carries out the reaction L-glutamate = D-glutamate. The protein operates within cell wall biogenesis; peptidoglycan biosynthesis. Functionally, provides the (R)-glutamate required for cell wall biosynthesis. The chain is Glutamate racemase from Cereibacter sphaeroides (strain ATCC 17023 / DSM 158 / JCM 6121 / CCUG 31486 / LMG 2827 / NBRC 12203 / NCIMB 8253 / ATH 2.4.1.) (Rhodobacter sphaeroides).